The sequence spans 201 residues: Large ribosomal subunit protein uL18 (201 aa).

It belongs to the universal ribosomal protein uL18 family. In terms of assembly, part of the 50S ribosomal subunit. Contacts the 5S and 23S rRNAs.

Functionally, this is one of the proteins that bind and probably mediate the attachment of the 5S RNA into the large ribosomal subunit, where it forms part of the central protuberance. This chain is Large ribosomal subunit protein uL18, found in Thermococcus onnurineus (strain NA1).